We begin with the raw amino-acid sequence, 416 residues long: uncharacterized protein (416 aa).

The tract at residues glutamate 341–leucine 360 is disordered.

This is an uncharacterized protein from Human cytomegalovirus (strain AD169) (HHV-5).